A 206-amino-acid chain; its full sequence is Large ribosomal subunit protein uL4 (206 aa).

Residues 45-76 (RQGTQSAKTRTEVSGGGIKPWRQKGTGRARQG) form a disordered region.

This sequence belongs to the universal ribosomal protein uL4 family. Part of the 50S ribosomal subunit.

Its function is as follows. One of the primary rRNA binding proteins, this protein initially binds near the 5'-end of the 23S rRNA. It is important during the early stages of 50S assembly. It makes multiple contacts with different domains of the 23S rRNA in the assembled 50S subunit and ribosome. Forms part of the polypeptide exit tunnel. The polypeptide is Large ribosomal subunit protein uL4 (Clostridium acetobutylicum (strain ATCC 824 / DSM 792 / JCM 1419 / IAM 19013 / LMG 5710 / NBRC 13948 / NRRL B-527 / VKM B-1787 / 2291 / W)).